The primary structure comprises 490 residues: Probable cytosol aminopeptidase (490 aa).

Positions 260 and 265 each coordinate Mn(2+). The active site involves Lys-272. Residues Asp-284, Asp-343, and Glu-345 each coordinate Mn(2+). Residue Arg-347 is part of the active site.

The protein belongs to the peptidase M17 family. It depends on Mn(2+) as a cofactor.

The protein resides in the cytoplasm. The catalysed reaction is Release of an N-terminal amino acid, Xaa-|-Yaa-, in which Xaa is preferably Leu, but may be other amino acids including Pro although not Arg or Lys, and Yaa may be Pro. Amino acid amides and methyl esters are also readily hydrolyzed, but rates on arylamides are exceedingly low.. The enzyme catalyses Release of an N-terminal amino acid, preferentially leucine, but not glutamic or aspartic acids.. Its function is as follows. Presumably involved in the processing and regular turnover of intracellular proteins. Catalyzes the removal of unsubstituted N-terminal amino acids from various peptides. This is Probable cytosol aminopeptidase from Gloeothece citriformis (strain PCC 7424) (Cyanothece sp. (strain PCC 7424)).